Here is a 97-residue protein sequence, read N- to C-terminus: UPF0235 protein LHK_03181 (97 aa).

It belongs to the UPF0235 family.

The protein is UPF0235 protein LHK_03181 of Laribacter hongkongensis (strain HLHK9).